The following is a 65-amino-acid chain: Large ribosomal subunit protein uL29 (65 aa).

It belongs to the universal ribosomal protein uL29 family.

This Desulforamulus reducens (strain ATCC BAA-1160 / DSM 100696 / MI-1) (Desulfotomaculum reducens) protein is Large ribosomal subunit protein uL29.